A 353-amino-acid chain; its full sequence is Sphingosine 1-phosphate receptor 2 (353 aa).

Residues 1 to 34 (MGSLYSEYLNPNKVQEHYNYTKETLETQETTSRQ) lie on the Extracellular side of the membrane. N-linked (GlcNAc...) asparagine glycosylation is present at Asn-19. A helical transmembrane segment spans residues 35-59 (VASAFIVILCCAIVVENLLVLIAVA). At 60–66 (RNSKFHS) the chain is on the cytoplasmic side. Residues 67-95 (AMYLFLGNLAASDLLAGVAFVANTLLSGS) traverse the membrane as a helical segment. The Extracellular portion of the chain corresponds to 96–109 (VTLRLTPVQWFARE). Residues 110–128 (GSAFITLSASVFSLLAIAI) form a helical membrane-spanning segment. The Cytoplasmic portion of the chain corresponds to 129-147 (ERHVAIAKVKLYGSDKSCR). A helical membrane pass occupies residues 148-173 (MLLLIGASWLISLVLGGLPILGWNCL). Residues 174–189 (GHLEACSTVLPLYAKH) lie on the Extracellular side of the membrane. The helical transmembrane segment at 190–210 (YVLCVVTIFSIILLAIVALYV) threads the bilayer. Topologically, residues 211 to 233 (RIYCVVRSSHADMAAPQTLALLK) are cytoplasmic. Residues 234–255 (TVTIVLGVFIVCWLPAFSILLL) traverse the membrane as a helical segment. Residues 256–271 (DYACPVHSCPILYKAH) lie on the Extracellular side of the membrane. The chain crosses the membrane as a helical span at residues 272-292 (YFFAVSTLNSLLNPVIYTWRS). Topologically, residues 293–353 (RDLRREVLRP…PTFLEGNTVV (61 aa)) are cytoplasmic. Cys-305 is lipidated: S-palmitoyl cysteine.

Belongs to the G-protein coupled receptor 1 family.

It localises to the cell membrane. Functionally, receptor for the lysosphingolipid sphingosine 1-phosphate (S1P). S1P is a bioactive lysophospholipid that elicits diverse physiological effects on most types of cells and tissues. When expressed in rat HTC4 hepatoma cells, is capable of mediating S1P-induced cell proliferation and suppression of apoptosis. Receptor for the chemokine-like protein FAM19A5. Mediates the inhibitory effect of FAM19A5 on vascular smooth muscle cell proliferation and migration. In lymphoid follicles, couples the binding of S1P to the activation of GNA13 and downstream inhibition of AKT activation leading to suppression of germinal center (GC) B cell growth and migration outside the GC niche. This Homo sapiens (Human) protein is Sphingosine 1-phosphate receptor 2 (S1PR2).